We begin with the raw amino-acid sequence, 544 residues long: Methionine--tRNA ligase 2 (544 aa).

Residues 10-20 carry the 'HIGH' region motif; the sequence is PYANGSLHLGH. Zn(2+) is bound by residues Cys-141, Cys-144, Cys-153, and Cys-156. Positions 329–333 match the 'KMSKS' region motif; the sequence is KLSTS. Residue Thr-332 coordinates ATP.

Belongs to the class-I aminoacyl-tRNA synthetase family. MetG type 1 subfamily. Monomer. Zn(2+) serves as cofactor.

It localises to the cytoplasm. It catalyses the reaction tRNA(Met) + L-methionine + ATP = L-methionyl-tRNA(Met) + AMP + diphosphate. Its function is as follows. Is required not only for elongation of protein synthesis but also for the initiation of all mRNA translation through initiator tRNA(fMet) aminoacylation. The chain is Methionine--tRNA ligase 2 from Bacillus anthracis.